The sequence spans 697 residues: Polyribonucleotide nucleotidyltransferase (697 aa).

Asp489 and Asp495 together coordinate Mg(2+). A KH domain is found at 556–615 (PRIETIKIKPDKIREVIGSGGKVIRGITEATGVKIEIQDDGTINIASADPEATKKAIAMI). Residues 625–693 (GKTYKGRIVK…RSGRVKLSRK (69 aa)) form the S1 motif domain.

The protein belongs to the polyribonucleotide nucleotidyltransferase family. The cofactor is Mg(2+).

The protein localises to the cytoplasm. It catalyses the reaction RNA(n+1) + phosphate = RNA(n) + a ribonucleoside 5'-diphosphate. Its function is as follows. Involved in mRNA degradation. Catalyzes the phosphorolysis of single-stranded polyribonucleotides processively in the 3'- to 5'-direction. The sequence is that of Polyribonucleotide nucleotidyltransferase from Bdellovibrio bacteriovorus (strain ATCC 15356 / DSM 50701 / NCIMB 9529 / HD100).